The sequence spans 750 residues: Neprilysin (750 aa).

Polar residues predominate over residues 1 to 14 (MGKSESQMDITDIN). The tract at residues 1–20 (MGKSESQMDITDINTPKPKK) is disordered. The N-myristoyl glycine moiety is linked to residue glycine 2. Residues 2-28 (GKSESQMDITDINTPKPKKKQRWTPLE) lie on the Cytoplasmic side of the membrane. A phosphoserine mark is found at serine 4 and serine 6. The short motif at 16–23 (PKPKKKQR) is the Stop-transfer sequence element. The helical; Signal-anchor for type II membrane protein transmembrane segment at 29-51 (ISLSVLVLLLTIIAVTMIALYAT) threads the bilayer. Over 52-750 (YDDGICKSSD…MNPEKKCRVW (699 aa)) the chain is Extracellular. Positions 56–750 (ICKSSDCIKS…MNPEKKCRVW (695 aa)) constitute a Peptidase M13 domain. Disulfide bonds link cysteine 57–cysteine 62, cysteine 80–cysteine 735, cysteine 88–cysteine 695, cysteine 143–cysteine 411, cysteine 234–cysteine 242, and cysteine 621–cysteine 747. A peptide is bound at residue arginine 103. Asparagine 145 is a glycosylation site (N-linked (GlcNAc...) asparagine). Residues asparagine 285, asparagine 311, asparagine 325, and asparagine 335 are each glycosylated (N-linked (GlcNAc...) asparagine). Histidine 584 is a binding site for Zn(2+). Residue glutamate 585 is part of the active site. Residue histidine 588 participates in Zn(2+) binding. N-linked (GlcNAc...) asparagine glycosylation is present at asparagine 628. Residue glutamate 647 coordinates Zn(2+). Aspartate 651 acts as the Proton donor in catalysis.

This sequence belongs to the peptidase M13 family. Requires Zn(2+) as cofactor. In terms of processing, myristoylation is a determinant of membrane targeting. Post-translationally, glycosylation at Asn-628 is necessary both for surface expression and neutral endopeptidase activity.

It localises to the cell membrane. It carries out the reaction Preferential cleavage of polypeptides between hydrophobic residues, particularly with Phe or Tyr at P1'.. It catalyses the reaction substance P + H2O = substance P(1-9) + L-Leu-L-Met-NH2. The enzyme catalyses substance P + H2O = substance P(1-7) + L-Phe-Gly-L-Leu-L-Met-NH2. The catalysed reaction is neurotensin + H2O = neurotensin(1-11) + L-isoleucyl-L-leucine. It carries out the reaction neurotensin + H2O = neurotensin(1-10) + L-tyrosyl-L-isoleucyl-L-leucine. Thermolysin-like specificity, but is almost confined on acting on polypeptides of up to 30 amino acids. Biologically important in the destruction of opioid peptides such as Met- and Leu-enkephalins by cleavage of a Gly-Phe bond. Catalyzes cleavage of bradykinin, substance P and neurotensin peptides. Able to cleave angiotensin-1, angiotensin-2 and angiotensin 1-9. Involved in the degradation of atrial natriuretic factor (ANF) and brain natriuretic factor (BNP(1-32)). Displays UV-inducible elastase activity toward skin preelastic and elastic fibers. This is Neprilysin (MME) from Pongo abelii (Sumatran orangutan).